The primary structure comprises 194 residues: Ribosome maturation factor RimM (194 aa).

One can recognise a PRC barrel domain in the interval Asp92–Leu190.

It belongs to the RimM family. In terms of assembly, binds ribosomal protein uS19.

The protein resides in the cytoplasm. In terms of biological role, an accessory protein needed during the final step in the assembly of 30S ribosomal subunit, possibly for assembly of the head region. Essential for efficient processing of 16S rRNA. May be needed both before and after RbfA during the maturation of 16S rRNA. It has affinity for free ribosomal 30S subunits but not for 70S ribosomes. The polypeptide is Ribosome maturation factor RimM (Corynebacterium urealyticum (strain ATCC 43042 / DSM 7109)).